We begin with the raw amino-acid sequence, 66 residues long: Large ribosomal subunit protein bL35 (66 aa).

Residues 1–26 (MPKMKTHRGGAKRVKRTGSGKLKRSR) are compositionally biased toward basic residues. 2 disordered regions span residues 1 to 28 (MPKMKTHRGGAKRVKRTGSGKLKRSRAY) and 36 to 55 (KSTKQKRGLRKASLVSKGDQ).

This sequence belongs to the bacterial ribosomal protein bL35 family.

In Macrococcus caseolyticus (strain JCSC5402) (Macrococcoides caseolyticum), this protein is Large ribosomal subunit protein bL35.